A 623-amino-acid chain; its full sequence is NADPH-dependent diflavin oxidoreductase 1 (623 aa).

The region spanning 8-153 is the Flavodoxin-like domain; that stretch reads LLVLYASQTG…TLDPWMLSLW (146 aa). FMN contacts are provided by residues 14-19, 62-65, and aspartate 135; these read SQTGNA and STTG. Residues 221 to 467 enclose the FAD-binding FR-type domain; sequence KPDCFLKMTR…SLPAPSQSLP (247 aa). FAD-binding positions include arginine 369, 399–402, and 433–436; these read RAFS and GLCS. NADP(+) is bound by residues threonine 475, 541–542, 547–551, and aspartate 583; these read SR and KVYVQ. Tryptophan 622 provides a ligand contact to FAD.

This sequence belongs to the NADPH-dependent diflavin oxidoreductase NDOR1 family. It in the N-terminal section; belongs to the flavodoxin family. The protein in the C-terminal section; belongs to the flavoprotein pyridine nucleotide cytochrome reductase family. Interacts with At5g18400. It depends on FAD as a cofactor. The cofactor is FMN. As to expression, widely expressed.

It localises to the cytoplasm. The protein resides in the nucleus. The enzyme catalyses 2 oxidized [2Fe-2S]-[protein] + NADPH = 2 reduced [2Fe-2S]-[protein] + NADP(+) + H(+). In terms of biological role, NADPH-dependent reductase which is a central component of the cytosolic iron-sulfur (Fe-S) protein assembly (CIA) machinery. Transfers electrons from NADPH via its FAD and FMN prosthetic groups to the [2Fe-2S] cluster of the anamorsin/DRE2 homolog, another key component of the CIA machinery. In turn, this reduced cluster provides electrons for assembly of cytosolic iron-sulfur cluster proteins. Catalyzes the NADP-dependent reduction of cytochrome c, but not cytochrome P450 in vitro. Required for embryo development. This chain is NADPH-dependent diflavin oxidoreductase 1 (ATR3), found in Arabidopsis thaliana (Mouse-ear cress).